Here is a 319-residue protein sequence, read N- to C-terminus: Protein PR73 (319 aa).

The disordered stretch occupies residues 1 to 39 (MPRLQQKWLNSRECPTPRGEAAKGLFPTKDDPSAHKRVS). Residues 1 to 44 (MPRLQQKWLNSRECPTPRGEAAKGLFPTKDDPSAHKRVSPSDKD) are Cytoplasmic-facing. The segment covering 28 to 39 (TKDDPSAHKRVS) has biased composition (basic and acidic residues). Residues 45–65 (IFILCCKLGIALLCLGLLGEV) form a helical membrane-spanning segment. Residues 66–319 (AVRARRALTL…AKTYGMSYYE (254 aa)) lie on the Extracellular side of the membrane. 5 N-linked (GlcNAc...) asparagine; by host glycosylation sites follow: Asn79, Asn89, Asn93, Asn131, and Asn146.

It belongs to the mouse mammary tumor virus PR73 superantigen family.

It is found in the membrane. In terms of biological role, superantigen. The chain is Protein PR73 (sag) from Mus musculus (Mouse).